A 326-amino-acid chain; its full sequence is Glycerol-3-phosphate dehydrogenase [NAD(P)+] (326 aa).

3 residues coordinate NADPH: W13, R33, and K107. Positions 107, 135, and 137 each coordinate sn-glycerol 3-phosphate. A139 contacts NADPH. Residues K190, D243, S253, R254, and N255 each contribute to the sn-glycerol 3-phosphate site. K190 serves as the catalytic Proton acceptor. R254 contributes to the NADPH binding site. The NADPH site is built by L273 and E275.

It belongs to the NAD-dependent glycerol-3-phosphate dehydrogenase family.

It is found in the cytoplasm. It carries out the reaction sn-glycerol 3-phosphate + NAD(+) = dihydroxyacetone phosphate + NADH + H(+). The enzyme catalyses sn-glycerol 3-phosphate + NADP(+) = dihydroxyacetone phosphate + NADPH + H(+). The protein operates within membrane lipid metabolism; glycerophospholipid metabolism. Its function is as follows. Catalyzes the reduction of the glycolytic intermediate dihydroxyacetone phosphate (DHAP) to sn-glycerol 3-phosphate (G3P), the key precursor for phospholipid synthesis. The chain is Glycerol-3-phosphate dehydrogenase [NAD(P)+] from Brucella ovis (strain ATCC 25840 / 63/290 / NCTC 10512).